The following is a 77-amino-acid chain: Small ribosomal subunit protein bS20 (77 aa).

It belongs to the bacterial ribosomal protein bS20 family.

Its function is as follows. Binds directly to 16S ribosomal RNA. The sequence is that of Small ribosomal subunit protein bS20 from Streptococcus agalactiae serotype Ia (strain ATCC 27591 / A909 / CDC SS700).